We begin with the raw amino-acid sequence, 152 residues long: SsrA-binding protein (152 aa).

It belongs to the SmpB family.

It localises to the cytoplasm. Its function is as follows. Required for rescue of stalled ribosomes mediated by trans-translation. Binds to transfer-messenger RNA (tmRNA), required for stable association of tmRNA with ribosomes. tmRNA and SmpB together mimic tRNA shape, replacing the anticodon stem-loop with SmpB. tmRNA is encoded by the ssrA gene; the 2 termini fold to resemble tRNA(Ala) and it encodes a 'tag peptide', a short internal open reading frame. During trans-translation Ala-aminoacylated tmRNA acts like a tRNA, entering the A-site of stalled ribosomes, displacing the stalled mRNA. The ribosome then switches to translate the ORF on the tmRNA; the nascent peptide is terminated with the 'tag peptide' encoded by the tmRNA and targeted for degradation. The ribosome is freed to recommence translation, which seems to be the essential function of trans-translation. The protein is SsrA-binding protein of Rickettsia prowazekii (strain Madrid E).